The primary structure comprises 352 residues: Molybdenum import ATP-binding protein ModC (352 aa).

The ABC transporter domain maps to 1 to 229 (MLELNFSQTL…SVMHPWLPKE (229 aa)). 31 to 38 (GVSGAGKT) provides a ligand contact to ATP. Positions 289–352 (QTSIRNVLRA…AQVKSVSITA (64 aa)) constitute a Mop domain.

The protein belongs to the ABC transporter superfamily. Molybdate importer (TC 3.A.1.8) family. As to quaternary structure, the complex is composed of two ATP-binding proteins (ModC), two transmembrane proteins (ModB) and a solute-binding protein (ModA).

Its subcellular location is the cell inner membrane. The enzyme catalyses molybdate(out) + ATP + H2O = molybdate(in) + ADP + phosphate + H(+). Functionally, part of the ABC transporter complex ModABC involved in molybdenum import. Responsible for energy coupling to the transport system. The chain is Molybdenum import ATP-binding protein ModC from Salmonella typhi.